Here is a 368-residue protein sequence, read N- to C-terminus: Peptide chain release factor 2 (368 aa).

Gln-250 carries the N5-methylglutamine modification.

The protein belongs to the prokaryotic/mitochondrial release factor family. In terms of processing, methylated by PrmC. Methylation increases the termination efficiency of RF2.

The protein localises to the cytoplasm. Functionally, peptide chain release factor 2 directs the termination of translation in response to the peptide chain termination codons UGA and UAA. The protein is Peptide chain release factor 2 of Rickettsia felis (strain ATCC VR-1525 / URRWXCal2) (Rickettsia azadi).